We begin with the raw amino-acid sequence, 247 residues long: Programmed cell death 1 ligand 2 (247 aa).

A signal peptide spans 1–19 (MLLLLPILNLSLQLHPVAA). Residues 20–221 (LFTVTAPKEV…RMEPKVPRTW (202 aa)) lie on the Extracellular side of the membrane. Residues 21-118 (FTVTAPKEVY…AWDYKYLTVK (98 aa)) form the Ig-like V-type domain. 2 disulfides stabilise this stretch: Cys42–Cys102 and Cys143–Cys192. N-linked (GlcNAc...) asparagine glycans are attached at residues Asn64, Asn157, Asn163, and Asn189. The Ig-like C2-type domain maps to 122–203 (SYMRIDTRIL…FWNAHMKELT (82 aa)). The chain crosses the membrane as a helical span at residues 222–242 (PLHVFIPACTIALIFLAIVII). The Cytoplasmic segment spans residues 243–247 (QRKRI).

This sequence belongs to the immunoglobulin superfamily. BTN/MOG family. As to quaternary structure, interacts with PDCD1. In terms of tissue distribution, expressed in immature and mature bone marrow-derived dendritic cells and splenic dendritic cells. Highly expressed in placenta, liver and weakly expressed in heart, spleen, lymph nodes and thymus. Also expressed in some tumor cell lines of lymphoid origin.

Its subcellular location is the cell membrane. Involved in the costimulatory signal essential for T-cell proliferation and IFNG production in a PDCD1-independent manner. Interaction with PDCD1 inhibits T-cell proliferation by blocking cell cycle progression and cytokine production. This Mus musculus (Mouse) protein is Programmed cell death 1 ligand 2 (Pdcd1lg2).